A 317-amino-acid polypeptide reads, in one-letter code: Ret finger protein-like 3 (317 aa).

The RING-type zinc finger occupies 40-82 (CPVCSDYLEKPMSLECGCTVCLKCINSLQKEPHGEDLLCCCCS). The 195-residue stretch at 107–301 (EPKLKKILQM…DQGVLSICPL (195 aa)) folds into the B30.2/SPRY domain.

In terms of tissue distribution, expressed during neurogenesis in differentiating human embryonic stem cells and in the developing human neocortex.

It localises to the cytoplasm. It is found in the nucleus. Its function is as follows. (Microbial infection) Stimulates the activity of Human Immunodeficiency Virus 1/HIV-1 pre-integration complex. In Homo sapiens (Human), this protein is Ret finger protein-like 3 (RFPL3).